Here is a 99-residue protein sequence, read N- to C-terminus: Goannatyrotoxin-Vere1 (99 aa).

An N-terminal signal peptide occupies residues 1 to 28 (MIASMKPWPLVMVAALCILFCLGTLVDA). Tyrosine amide is present on Tyr-64. Positions 68–99 (SSPETLMSELIFGENSNSDHSSRSRFDDSYMW) are cleaved as a propeptide — C-terminal extension.

The protein belongs to the NPY family. As to expression, expressed by the mandibular venom gland.

It is found in the secreted. Shows a potent unique triphasic action, rapid biphasic hypertension followed by prolonged hypotension. The polypeptide is Goannatyrotoxin-Vere1 (Varanus eremius (Rusty desert monitor)).